Consider the following 1032-residue polypeptide: Integrin alpha-4 (1032 aa).

Residues 1–33 (MAWEARREPGPRRAAVRETVMLLLCLGVPTGRP) form the signal peptide. FG-GAP repeat units lie at residues 35-100 (NVDT…PGQT), 110-177 (NGEP…TELS), 185-237 (QDYV…KYKA), 238-291 (FLDK…EKEL), 292-351 (NILH…GAVM), 355-412 (ETNL…GISS), and 416-478 (QRIE…HPES). Residues 35-977 (NVDTESALLY…HHQRPKRYFT (943 aa)) lie on the Extracellular side of the membrane. N-linked (GlcNAc...) asparagine glycosylation is present at N79. C91 and C101 are disulfide-bonded. The N-linked (GlcNAc...) asparagine glycan is linked to N138. 2 cysteine pairs are disulfide-bonded: C144–C165 and C183–C198. N229 is a glycosylation site (N-linked (GlcNAc...) asparagine). Positions 314, 316, 318, 322, 377, 379, 381, 385, 439, 441, 443, 445, and 447 each coordinate Ca(2+). N-linked (GlcNAc...) asparagine glycosylation is present at N480. Intrachain disulfides connect C486–C495 and C501–C557. 2 N-linked (GlcNAc...) asparagine glycosylation sites follow: N518 and N538. Positions 606–616 (KKEKDIMKKTI) match the SG1 motif. The cysteines at positions 622 and 627 are disulfide-linked. N626, N645, and N660 each carry an N-linked (GlcNAc...) asparagine glycan. A disulfide bond links C698 and C711. N-linked (GlcNAc...) asparagine glycans are attached at residues N806 and N821. 2 disulfides stabilise this stretch: C852–C890 and C897–C902. The helical transmembrane segment at 978–1001 (IVIISSSLLLGLIVLLLISYVMWK) threads the bilayer. Over 1002-1032 (AGFFKRQYKSILQEENRRDSWSYINSKSNDD) the chain is Cytoplasmic. The GFFKR motif signature appears at 1003–1007 (GFFKR). Position 1021 is a phosphoserine (S1021).

The protein belongs to the integrin alpha chain family. Heterodimer of an alpha and a beta subunit. The alpha subunit can sometimes be cleaved into two non-covalently associated fragments. Alpha-4 associates with either beta-1 or beta-7. Alpha-4 interacts with PXN, LPXN, and TGFB1I1/HIC5. Interacts with CSPG4 through CSPG4 chondroitin sulfate glycosaminoglycan. Interacts with JAML; integrin alpha-4/beta-1 may regulate leukocyte to endothelial cells adhesion by controlling JAML homodimerization. ITGA4:ITGB1 is found in a ternary complex with CX3CR1 and CX3CL1. Interacts with MDK. ITGA4:ITGB1 interacts with MDK; this interaction mediates MDK-induced osteoblast cells migration through PXN phosphorylation. Integrin ITGA4:ITGB1 interacts with SVEP1 (via Sushi domain 21); thereby inhibits Ca(2+) intracellular signaling and as a result represses vasocontraction. ITGA4:ITGB1 interacts with SELP. ITGA4:ITGB1 interacts with BCAM. In terms of processing, phosphorylation on Ser-1027 inhibits PXN binding. In terms of tissue distribution, expressed in vascular smooth muscle cells (at protein level).

It localises to the membrane. Its function is as follows. Integrins alpha-4/beta-1 (VLA-4) and alpha-4/beta-7 are receptors for fibronectin. They recognize one or more domains within the alternatively spliced CS-1 and CS-5 regions of fibronectin. They are also receptors for VCAM1. Integrin alpha-4/beta-1 recognizes the sequence Q-I-D-S in VCAM1. Integrin alpha-4/beta-7 is also a receptor for MADCAM1. It recognizes the sequence L-D-T in MADCAM1. On activated endothelial cells integrin VLA-4 triggers homotypic aggregation for most VLA-4-positive leukocyte cell lines. It may also participate in cytolytic T-cell interactions with target cells. ITGA4:ITGB1 binds to fractalkine (CX3CL1) and may act as its coreceptor in CX3CR1-dependent fractalkine signaling. ITGA4:ITGB1 binds to PLA2G2A via a site (site 2) which is distinct from the classical ligand-binding site (site 1) and this induces integrin conformational changes and enhanced ligand binding to site 1. Integrin ITGA4:ITGB1 represses PRKCA-mediated L-type voltage-gated channel Ca(2+) influx and ROCK-mediated calcium sensitivity in vascular smooth muscle cells via its interaction with SVEP1, thereby inhibiting vasocontraction. The polypeptide is Integrin alpha-4 (ITGA4) (Homo sapiens (Human)).